We begin with the raw amino-acid sequence, 685 residues long: Bifunctional diguanylate cyclase/cyclic di-GMP phosphodiesterase MucR (685 aa).

An MHYT domain is found at 6–199 (YNQVLVAFSL…YTGMAAAQFP (194 aa)). 7 helical membrane passes run 9-29 (VLVA…LDMA), 44-64 (LIGG…VGML), 77-97 (GLTL…LWLV), 117-137 (GIAA…GIVY), 141-161 (WLGL…WIAF), 175-195 (AGAA…GMAA), and 214-234 (GWLA…ALIV). The Cytoplasmic segment spans residues 235–685 (SVLDSRLEAR…PAEQLLASVA (451 aa)). Residues 293–425 (RRFAVLFMDL…GRNGYCFFES (133 aa)) enclose the GGDEF domain. The EAL domain occupies 434-685 (QLQLLHDLRQ…PAEQLLASVA (252 aa)). 6 residues coordinate 3',3'-c-di-GMP: glutamine 455, glutamate 469, leucine 472, arginine 473, asparagine 528, and glutamine 533. Glutamate 469 serves as a coordination point for Mg(2+). Position 528 (asparagine 528) interacts with Mg(2+). Positions 560, 590, and 591 each coordinate Mg(2+). Aspartate 590 contributes to the 3',3'-c-di-GMP binding site. Position 614 (arginine 614) interacts with 3',3'-c-di-GMP. Mg(2+) is bound at residue glutamate 647. Residues glutamate 650 and phenylalanine 669 each contribute to the 3',3'-c-di-GMP site.

Homodimer. The cofactor is Mg(2+).

It is found in the cell inner membrane. The catalysed reaction is 2 GTP = 3',3'-c-di-GMP + 2 diphosphate. The enzyme catalyses 3',3'-c-di-GMP + H2O = 5'-phosphoguanylyl(3'-&gt;5')guanosine + H(+). Its function is as follows. Displays both diguanylate cyclase (DGC) and c-di-GMP-specific phosphodiesterase (PDE) activity. Probably modulates DGC and PDE activities, and thus c-di-GMP levels, in a growth mode-dependent manner. May act as a PDE under planktonic growth conditions and as a DGC in biofilms. During biofilm formation, it specifically activates alginate biosynthesis via generation of a localized c-di-GMP pool in the vicinity of the alginate biosynthesis protein Alg44. This chain is Bifunctional diguanylate cyclase/cyclic di-GMP phosphodiesterase MucR, found in Pseudomonas aeruginosa (strain ATCC 15692 / DSM 22644 / CIP 104116 / JCM 14847 / LMG 12228 / 1C / PRS 101 / PAO1).